The following is a 342-amino-acid chain: L-threonine 3-dehydrogenase (342 aa).

Position 38 (Cys-38) interacts with Zn(2+). Active-site charge relay system residues include Thr-40 and His-43. Zn(2+) is bound by residues His-63, Glu-64, Cys-93, Cys-96, Cys-99, and Cys-107. Residues Ile-175, Asp-195, Arg-200, Leu-262–Ile-264, and Ile-286–Tyr-287 each bind NAD(+).

Belongs to the zinc-containing alcohol dehydrogenase family. In terms of assembly, homotetramer. It depends on Zn(2+) as a cofactor.

The protein resides in the cytoplasm. It carries out the reaction L-threonine + NAD(+) = (2S)-2-amino-3-oxobutanoate + NADH + H(+). It participates in amino-acid degradation; L-threonine degradation via oxydo-reductase pathway; glycine from L-threonine: step 1/2. Its function is as follows. Catalyzes the NAD(+)-dependent oxidation of L-threonine to 2-amino-3-ketobutyrate. The chain is L-threonine 3-dehydrogenase from Burkholderia multivorans (strain ATCC 17616 / 249).